A 387-amino-acid polypeptide reads, in one-letter code: Putative gustatory receptor 22d (387 aa).

Residues 1 to 43 are Cytoplasmic-facing; sequence MFRPRCGLRQKFVYVILKSILYSSWLLGIFPFKYEPKKRRLRR. A helical transmembrane segment spans residues 44–64; the sequence is SMWLILFGVVISSSLLILMVK. At 65-82 the chain is on the extracellular side; that stretch reads QSAEDREHGIMLDVFQRN. A helical membrane pass occupies residues 83–103; sequence ALLYQISSLMGVVGVVSICTV. The Cytoplasmic segment spans residues 104-142; sequence HLRTLWRSKHLEEIYNGLMLLEAKYFCSNAVECPAFDGY. The chain crosses the membrane as a helical span at residues 143 to 163; the sequence is VIQKGVVIVVGLLAPWMVHFG. The Extracellular portion of the chain corresponds to 164-184; sequence MPDSKLPVLNVLVVSMVKLGT. The chain crosses the membrane as a helical span at residues 185–205; sequence LLLALHYHLGVVIIYRFVWLI. Residues 206–252 lie on the Cytoplasmic side of the membrane; that stretch reads NRELLSLVCSLRGNHKGSSSRVRFLLKLYNKLVNLYSKLADCYDCQT. Residues 253 to 273 traverse the membrane as a helical segment; that stretch reads VLMMAIFLAANIIVCFYMIVY. The Extracellular segment spans residues 274–281; the sequence is RISLSKMS. Residues 282–302 form a helical membrane-spanning segment; it reads FFVMLIMFPLAIANNFMDFWL. Topologically, residues 303–363 are cytoplasmic; it reads SMKVCDLLQK…HCGLFHVNRE (61 aa). Residues 364 to 384 traverse the membrane as a helical segment; the sequence is MGFKMFVASVLYLLYLVQFDY. The Extracellular segment spans residues 385–387; sequence MNL.

Belongs to the insect chemoreceptor superfamily. Gustatory receptor (GR) family. Gr22e subfamily. As to expression, expressed in neurons of the dorsal pharyngeal sense organs of larvae.

It localises to the cell membrane. Functionally, probable gustatory receptor which mediates acceptance or avoidance behavior, depending on its substrates. The polypeptide is Putative gustatory receptor 22d (Drosophila melanogaster (Fruit fly)).